The chain runs to 232 residues: Large ribosomal subunit protein uL1 (232 aa).

It belongs to the universal ribosomal protein uL1 family. As to quaternary structure, part of the 50S ribosomal subunit.

Binds directly to 23S rRNA. The L1 stalk is quite mobile in the ribosome, and is involved in E site tRNA release. Functionally, protein L1 is also a translational repressor protein, it controls the translation of the L11 operon by binding to its mRNA. This Xylella fastidiosa (strain M12) protein is Large ribosomal subunit protein uL1.